A 341-amino-acid chain; its full sequence is Phosphoribosylformylglycinamidine cyclo-ligase (341 aa).

Belongs to the AIR synthase family.

Its subcellular location is the cytoplasm. It catalyses the reaction 2-formamido-N(1)-(5-O-phospho-beta-D-ribosyl)acetamidine + ATP = 5-amino-1-(5-phospho-beta-D-ribosyl)imidazole + ADP + phosphate + H(+). The protein operates within purine metabolism; IMP biosynthesis via de novo pathway; 5-amino-1-(5-phospho-D-ribosyl)imidazole from N(2)-formyl-N(1)-(5-phospho-D-ribosyl)glycinamide: step 2/2. In Thermosynechococcus vestitus (strain NIES-2133 / IAM M-273 / BP-1), this protein is Phosphoribosylformylglycinamidine cyclo-ligase.